We begin with the raw amino-acid sequence, 895 residues long: MVQRMWAEASGPIGGAEPLFPGSRRSRSVWDAVRLEVGVPDSCPVVLHSFTQLDPDLPRLESSTQEIGEELINGVIYSISLRKVQLYPGATKGQRWLGCENESALNLYETCKVRTVKAGTLEKLVEHLVPAFQGSDLSYVTVFLCTYRAFTTTQQVLDLLFKRYGCILPYSSEDGGPQDQLKNAISSILGTWLDQYSEDFCQPPDFPCLKQLVAYVQLNMPGSDLERRAHLLLAQLEDLEPSEVEPEALSPAPVLSLKPASQLEPAPALLLTPSRAVASTPVREPAPVPVLASSPVVAPASELEPALEPPLDPEPTLAPAPELDPTVSQSLHLEPAPVPAPALEPSWPLPETTENGLCAKPHLLLFPPDLVAEQFTLMDAELFKKVVPYHCLGSIWSQRAKKGKEHLAPTIRATVAQFNNVANCVITTCLGDQSMKASDRARVVEHWIEVARECRVLKNFSSLYAILSALQSNAIHRLKKTWEEVSRGSFRVFQKLSEIFSDENNYSLSRELLIKEGTSKFATLEMNPRRTQRRQKETGVIQGTVPYLGTFLTDLVMLDTAMKDYLYGRLINFEKRRKEFEVIAQIKLLQSACNNYSIVPEEHFGAWFRAMGRLSEAESYNLSCELEPPSESASNTLRSKKSTAIVKRWERRQAPSTELSTSSSAHSKSCDQLRCSPYLSSGDITDALSVHSAGSSTSDVEEINMSFVPESPDGQEKKFWESASQSSPETSGISSASSSTSSSSASTTPVSTTRTHKRSVSGVCSYSSSLPLYNQQVGDCCIIRVSLDVDNGNMYKSILVTSQDKAPTVIRKAMDKHNLDEDEPEDYELLQIISEDHKLKIPENANVFYAMNSAANYDFILKKRAFTKGAKVKHGASSTLPRMKQKGLRIARGIF.

Residues 112–237 enclose the N-terminal Ras-GEF domain; it reads KVRTVKAGTL…RAHLLLAQLE (126 aa). Residues 301–324 are disordered; the sequence is SELEPALEPPLDPEPTLAPAPELD. Over residues 307 to 318 the composition is skewed to pro residues; that stretch reads LEPPLDPEPTLA. Residues 367–629 enclose the Ras-GEF domain; it reads PPDLVAEQFT…YNLSCELEPP (263 aa). Disordered stretches follow at residues 650–669 and 708–754; these read ERRQAPSTELSTSSSAHSKS and VPES…STTR. Low complexity-rich tracts occupy residues 656 to 667 and 726 to 753; these read STELSTSSSAHS and SSPETSGISSASSSTSSSSASTTPVSTT. The Ras-associating domain maps to 779 to 866; sequence DCCIIRVSLD…YDFILKKRAF (88 aa). Y795 carries the post-translational modification Phosphotyrosine.

Interacts with RIT1 and RIT2. Interacts with TRAF3. Interacts with HRAS. Post-translationally, phosphorylation of Tyr-795 by MET blocks HRAS binding. In terms of tissue distribution, expressed in all tissues examined.

It localises to the cytoplasm. The protein localises to the nucleus. Functionally, functions as a guanine nucleotide exchange factor (GEF) activating either RalA or RalB GTPases and plays an important role in intracellular transport. Interacts and acts as an effector molecule for R-Ras, H-Ras, K-Ras, and Rap. During bacterial clearance, recognizes 'Lys-33'-linked polyubiquitinated TRAF3 and subsequently mediates assembly of the exocyst complex. This is Ral guanine nucleotide dissociation stimulator (Ralgds) from Rattus norvegicus (Rat).